Reading from the N-terminus, the 316-residue chain is Probable peptidyl-tRNA hydrolase 2 (316 aa).

A disordered region spans residues 1–127 (MSENIPDIDP…SHPVDPQEPN (127 aa)). The segment covering 44-53 (PTPSSVTVDN) has biased composition (polar residues). Residues 75-89 (IPEVPIPSSAISISS) show a composition bias toward low complexity. Residues 128 to 169 (EVNNEYLAHLLDLGFDEYTAVLALKRTNSAGVEQAVAWIVER) form the UBA domain. The tract at residues 170-193 (SNESDFDEDSSSSENEADEEMGAV) is disordered. The span at 173-190 (SDFDEDSSSSENEADEEM) shows a compositional bias: acidic residues.

The protein belongs to the PTH2 family.

It carries out the reaction an N-acyl-L-alpha-aminoacyl-tRNA + H2O = an N-acyl-L-amino acid + a tRNA + H(+). Functionally, the natural substrate for this enzyme may be peptidyl-tRNAs which drop off the ribosome during protein synthesis. The sequence is that of Probable peptidyl-tRNA hydrolase 2 from Caenorhabditis elegans.